The chain runs to 468 residues: UDP-glycosyltransferase 89B2 (468 aa).

Residues Ser-287, 347–348 (WV), 365–373 (HCGWNSVME), and 387–390 (SADQ) contribute to the UDP-alpha-D-glucose site.

It belongs to the UDP-glycosyltransferase family.

Functionally, may glycosylate diterpenes or flavonols in leaves. The protein is UDP-glycosyltransferase 89B2 of Stevia rebaudiana (Stevia).